The sequence spans 312 residues: tRNA dimethylallyltransferase (312 aa).

10–17 contributes to the ATP binding site; sequence GPTASGKS. Position 12–17 (12–17) interacts with substrate; it reads TASGKS. The interval 35–38 is interaction with substrate tRNA; it reads DSKQ.

It belongs to the IPP transferase family. Monomer. It depends on Mg(2+) as a cofactor.

It catalyses the reaction adenosine(37) in tRNA + dimethylallyl diphosphate = N(6)-dimethylallyladenosine(37) in tRNA + diphosphate. Catalyzes the transfer of a dimethylallyl group onto the adenine at position 37 in tRNAs that read codons beginning with uridine, leading to the formation of N6-(dimethylallyl)adenosine (i(6)A). The protein is tRNA dimethylallyltransferase of Anaplasma phagocytophilum (strain HZ).